Reading from the N-terminus, the 654-residue chain is Sphingosine kinase 2 (654 aa).

Residues 1-17 show a composition bias toward basic and acidic residues; that stretch reads MNGHLEAEEQQDQRPDQ. A disordered region spans residues 1-28; sequence MNGHLEAEEQQDQRPDQELTGSWGHGPR. Residues 1–175 form a required for binding to sulfatide and phosphoinositides and for membrane localizatione region; that stretch reads MNGHLEAEEQ…LPGDGEITPD (175 aa). Residues 122–130 carry the Nuclear localization signal motif; it reads RGRRGARRR. The DAGKc domain maps to 178–325; that stretch reads PRPPRLLLLV…LDLLSVTLAS (148 aa). ATP is bound by residues 188–190 and 220–224; these read NPF and TERQN. Position 245–248 (245–248) interacts with substrate; that stretch reads SGDG. The active-site Proton donor/acceptor is D247. ATP-binding positions include E252 and 277–279; that span reads GSG. D344 provides a ligand contact to substrate. Residues R351 and R357 each coordinate ATP. Phosphoserine; by MAPK is present on S387. A phosphoserine mark is found at S393 and S399. A disordered region spans residues 400–509; sequence ELTLTPDPAP…PLPTPDARVG (110 aa). The Nuclear export signal motif lies at 416–425; sequence LHRSVSDLPL. A phosphoserine; by PKD mark is found at S419 and S421. Positions 447–461 are enriched in gly residues; it reads NGGGPELAGDWGGAG. Residues 462 to 482 are compositionally biased toward low complexity; the sequence is DAPLSPDPLLSSPPGSPKAAL. S477 carries the post-translational modification Phosphoserine. At T614 the chain carries Phosphothreonine; by MAPK. An ATP-binding site is contributed by 622–624; it reads DGE.

As to quaternary structure, interacts with histone H3. Interacts with HDAC1, HDAC2, MBD2 and SIN3A. Interacts with EEF1A1; the interaction enhances SPHK2 kinase activity. Interacts with PHB2. It depends on Mg(2+) as a cofactor. Phosphorylated by PKD on Ser-419 and Ser-421 upon PMA treatment. Phosphorylation induces export from the nucleus to the cytoplasm. Phosphorylated by MAPK1 and MAPK2 at Ser-387 and Thr-614, phosphorylation is induced by agonists such as EGF and PMA and increases kinase activity. In terms of processing, cleaved by CASP1 in apoptotic cells. The truncated form is released from cells. Mainly expressed in adult kidney, liver, and brain. Expressed in cerebral cortex and hippocampus (at protein level). Isoform 1 is the predominant form expressed in most tissues.

The protein localises to the cytoplasm. It is found in the nucleus. It localises to the endoplasmic reticulum. The protein resides in the mitochondrion inner membrane. Its subcellular location is the lysosome membrane. It catalyses the reaction a sphingoid base + ATP = a sphingoid 1-phosphate + ADP + H(+). The catalysed reaction is sphing-4-enine + ATP = sphing-4-enine 1-phosphate + ADP + H(+). The enzyme catalyses sphinganine + ATP = sphinganine 1-phosphate + ADP + H(+). It carries out the reaction (4R)-hydroxysphinganine + ATP = (4R)-hydroxysphinganine 1-phosphate + ADP + H(+). With respect to regulation, inhibited by sulfatide. Kinase activity is increased by phosphorylation by MAPK2 upon PMA or EGF treatments. Functionally, catalyzes the phosphorylation of sphingosine to form sphingosine-1-phosphate (SPP), a lipid mediator with both intra- and extracellular functions. Also acts on D-erythro-dihydrosphingosine, D-erythro-sphingosine and L-threo-dihydrosphingosine. Binds phosphoinositides. In contrast to prosurvival SPHK1, has a positive effect on intracellular ceramide levels, inhibits cells growth and enhances apoptosis. In mitochondria, is important for cytochrome-c oxidase assembly and mitochondrial respiration. The SPP produced in mitochondria binds PHB2 and modulates the regulation via PHB2 of complex IV assembly and respiration. In nucleus, plays a role in epigenetic regulation of gene expression. Interacts with HDAC1 and HDAC2 and, through SPP production, inhibits their enzymatic activity, preventing the removal of acetyl groups from lysine residues with histones. Up-regulates acetylation of histone H3-K9, histone H4-K5 and histone H2B-K12. In nucleus, may have an inhibitory effect on DNA synthesis and cell cycle. In mast cells, is the main regulator of SPP production which mediates calcium influx, NF-kappa-B activation, cytokine production, such as TNF and IL6, and degranulation of mast cells. In dopaminergic neurons, is involved in promoting mitochondrial functions regulating ATP and ROS levels. Also involved in the regulation of glucose and lipid metabolism. This is Sphingosine kinase 2 from Homo sapiens (Human).